Reading from the N-terminus, the 293-residue chain is Undecaprenyl-diphosphatase (293 aa).

The next 6 helical transmembrane spans lie at valine 74–phenylalanine 94, tryptophan 107–isoleucine 127, methionine 134–methionine 154, phenylalanine 209–alanine 229, valine 243–valine 263, and phenylalanine 271–leucine 291.

The protein belongs to the UppP family.

The protein localises to the cell membrane. It catalyses the reaction di-trans,octa-cis-undecaprenyl diphosphate + H2O = di-trans,octa-cis-undecaprenyl phosphate + phosphate + H(+). Catalyzes the dephosphorylation of undecaprenyl diphosphate (UPP). Confers resistance to bacitracin. The chain is Undecaprenyl-diphosphatase from Corynebacterium glutamicum (strain ATCC 13032 / DSM 20300 / JCM 1318 / BCRC 11384 / CCUG 27702 / LMG 3730 / NBRC 12168 / NCIMB 10025 / NRRL B-2784 / 534).